The chain runs to 623 residues: Transketolase (623 aa).

At Met1 the chain carries N-acetylmethionine. An N6-acetyllysine mark is found at Lys6 and Lys11. Position 37 (His37) interacts with substrate. Ser40 and His77 together coordinate thiamine diphosphate. Ser104 is modified (phosphoserine). 123–125 (GSL) is a thiamine diphosphate binding site. At Lys144 the chain carries N6-acetyllysine. Position 155 (Asp155) interacts with Mg(2+). Gly156 and Asn185 together coordinate thiamine diphosphate. Mg(2+) is bound by residues Asn185 and Leu187. An N6-acetyllysine mark is found at Lys204, Lys232, and Lys241. Thiamine diphosphate is bound by residues Lys244 and His258. Residue His258 coordinates substrate. An N6-acetyllysine modification is found at Lys260. Tyr275 carries the post-translational modification Phosphotyrosine. Thr287 is modified (phosphothreonine). The residue at position 295 (Ser295) is a Phosphoserine. Positions 318 and 345 each coordinate substrate. The residue at position 345 (Ser345) is a Phosphoserine. Residue Lys352 forms a Glycyl lysine isopeptide (Lys-Gly) (interchain with G-Cter in SUMO2) linkage. Glu366 (proton donor) is an active-site residue. Phe392 contacts thiamine diphosphate. Substrate contacts are provided by His416 and Asp424. Thiamine diphosphate is bound at residue Gln428. Residue Arg474 coordinates substrate. N6-acetyllysine occurs at positions 538 and 603.

The protein belongs to the transketolase family. In terms of assembly, homodimer. Mg(2+) is required as a cofactor. Ca(2+) serves as cofactor. Requires Mn(2+) as cofactor. The cofactor is Co(2+). It depends on thiamine diphosphate as a cofactor.

It catalyses the reaction D-sedoheptulose 7-phosphate + D-glyceraldehyde 3-phosphate = aldehydo-D-ribose 5-phosphate + D-xylulose 5-phosphate. Catalyzes the transfer of a two-carbon ketol group from a ketose donor to an aldose acceptor, via a covalent intermediate with the cofactor thiamine pyrophosphate. This Mus musculus (Mouse) protein is Transketolase (Tkt).